A 288-amino-acid polypeptide reads, in one-letter code: MAVAQCPASCGELIQGWILGSEKLVSCPVEWYSTVEVTSGSPLTDERPLSRAMVDRLLQHWQYPAHLSQDIRIDVQSTIPIAKGMASSTADIAATAIAAAHYLGHQLDEPTLAQLCVSLEPTDSTVFRKLTLFDHNNASTQIGCEAQPQLDLLVLESPETLRTADYHRIPRHSGLQAGAAALQRAWEKVQEACISQNPYRLGEAATLSAIASQLLLPKPDFDSLLALVEECDLYGVNVAHSGSVVGLMLDRNRHDVDYIKWMLTQKKLTIHWPEQHLLRMVTGGVELQ.

80–90 (PIAKGMASSTA) provides a ligand contact to ATP.

It belongs to the GHMP kinase family. PduX subfamily.

It is found in the cytoplasm. The catalysed reaction is L-threonine + ATP = O-phospho-L-threonine + ADP + H(+). Its pathway is cofactor biosynthesis; adenosylcobalamin biosynthesis. It functions in the pathway polyol metabolism; 1,2-propanediol degradation. Its function is as follows. L-threonine kinase that catalyzes the conversion of L-threonine to L-threonine-O-3-phosphate. Involved in the de novo synthesis of adenosylcobalamin (coenzyme B12) and the assimilation of cobyric acid. Functionally, expression of a cosmid containing the full 21-gene pdu operon in E.coli allows E.coli to grow on 1,2-propanediol (1,2-PD) with the appearance of bacterial microcompartments (BMC) in its cytoplasm. In terms of biological role, the 1,2-PD-specific bacterial microcompartment (BMC) concentrates low levels of 1,2-PD catabolic enzymes, concentrates volatile reaction intermediates thus enhancing pathway flux and keeps the level of toxic, mutagenic propionaldehyde low. This gene probably benefits from its induction via the Pdu promoter, rather than a physical interaction with the BMC. The protein is L-threonine kinase of Citrobacter freundii.